A 238-amino-acid chain; its full sequence is Protein CPn_0658/CP_0089/CPj0658/CpB0684 (238 aa).

Belongs to the chlamydial CPn_0658/CT_538/TC_0825 family.

This Chlamydia pneumoniae (Chlamydophila pneumoniae) protein is Protein CPn_0658/CP_0089/CPj0658/CpB0684.